We begin with the raw amino-acid sequence, 151 residues long: Small ribosomal subunit protein uS15 (151 aa).

This sequence belongs to the universal ribosomal protein uS15 family.

The protein is Small ribosomal subunit protein uS15 (RPS13) of Agaricus bisporus (White button mushroom).